The sequence spans 222 residues: Large ribosomal subunit protein uL11c (222 aa).

The segment at 1–20 (MASSSLSTLCSSTSSSLHPN) is disordered. A chloroplast-targeting transit peptide spans 1-62 (MASSSLSTLC…TPRFLTVIAM (62 aa)).

This sequence belongs to the universal ribosomal protein uL11 family. In terms of assembly, part of the ribosomal stalk of the 50S ribosomal subunit. Interacts with L10 and the large rRNA to form the base of the stalk. L10 forms an elongated spine to which L12 dimers bind in a sequential fashion forming a multimeric L10(L12)X complex.

The protein resides in the plastid. Its subcellular location is the chloroplast. Functionally, forms part of the ribosomal stalk which helps the ribosome interact with GTP-bound translation factors. In Arabidopsis thaliana (Mouse-ear cress), this protein is Large ribosomal subunit protein uL11c (RPL11).